A 92-amino-acid chain; its full sequence is Small ribosomal subunit protein uS19 (92 aa).

It belongs to the universal ribosomal protein uS19 family.

Protein S19 forms a complex with S13 that binds strongly to the 16S ribosomal RNA. The chain is Small ribosomal subunit protein uS19 (rpsS) from Geobacillus stearothermophilus (Bacillus stearothermophilus).